A 187-amino-acid polypeptide reads, in one-letter code: Chromophore lyase CpcS/CpeS 2 (187 aa).

The protein belongs to the CpcS/CpeS biliprotein lyase family.

In terms of biological role, covalently attaches a chromophore to Cys residue(s) of phycobiliproteins. The chain is Chromophore lyase CpcS/CpeS 2 from Synechococcus sp. (strain JA-3-3Ab) (Cyanobacteria bacterium Yellowstone A-Prime).